A 283-amino-acid polypeptide reads, in one-letter code: Pantothenate synthetase (283 aa).

30–37 (MGNLHDGH) contributes to the ATP binding site. Residue His-37 is the Proton donor of the active site. Gln-61 provides a ligand contact to (R)-pantoate. Gln-61 contacts beta-alanine. 149-152 (GEKD) lines the ATP pocket. Gln-155 contacts (R)-pantoate. An ATP-binding site is contributed by 186–189 (LSSR).

This sequence belongs to the pantothenate synthetase family. As to quaternary structure, homodimer.

It is found in the cytoplasm. The enzyme catalyses (R)-pantoate + beta-alanine + ATP = (R)-pantothenate + AMP + diphosphate + H(+). The protein operates within cofactor biosynthesis; (R)-pantothenate biosynthesis; (R)-pantothenate from (R)-pantoate and beta-alanine: step 1/1. Functionally, catalyzes the condensation of pantoate with beta-alanine in an ATP-dependent reaction via a pantoyl-adenylate intermediate. This chain is Pantothenate synthetase, found in Escherichia coli O6:H1 (strain CFT073 / ATCC 700928 / UPEC).